Reading from the N-terminus, the 358-residue chain is Probable D-xylulose reductase A (358 aa).

Positions 47, 72, and 73 each coordinate Zn(2+). NAD(+) is bound at residue 182-187; the sequence is GAGPVG.

It belongs to the zinc-containing alcohol dehydrogenase family. Requires Zn(2+) as cofactor.

It carries out the reaction xylitol + NAD(+) = D-xylulose + NADH + H(+). It functions in the pathway carbohydrate degradation; L-arabinose degradation via L-arabinitol; D-xylulose 5-phosphate from L-arabinose (fungal route): step 4/5. Functionally, xylitol dehydrogenase which catalyzes the conversion of xylitol to D-xylulose. Xylose is a major component of hemicelluloses such as xylan. Most fungi utilize D-xylose via three enzymatic reactions, xylose reductase (XR), xylitol dehydrogenase (XDH), and xylulokinase, to form xylulose 5-phosphate, which enters pentose phosphate pathway. In Aspergillus fumigatus (strain CBS 144.89 / FGSC A1163 / CEA10) (Neosartorya fumigata), this protein is Probable D-xylulose reductase A (xdhA).